We begin with the raw amino-acid sequence, 157 residues long: uncharacterized protein (157 aa).

The protein to E.coli YcjD and H.influenzae HI_0925.

This is an uncharacterized protein from Haemophilus influenzae (strain ATCC 51907 / DSM 11121 / KW20 / Rd).